Consider the following 303-residue polypeptide: Putative HTH-type transcriptional regulatory protein Mpal_0031 (303 aa).

The HTH cro/C1-type domain maps to 132–189; the sequence is LRGLREQRNMSLGDLGAVLGVSRRTISKYESGMGTTLEIAIKIEEVFDSGVIESIDLL. A DNA-binding region (H-T-H motif) is located at residues 143 to 162; that stretch reads LGDLGAVLGVSRRTISKYES.

The polypeptide is Putative HTH-type transcriptional regulatory protein Mpal_0031 (Methanosphaerula palustris (strain ATCC BAA-1556 / DSM 19958 / E1-9c)).